A 176-amino-acid chain; its full sequence is Crossover junction endodeoxyribonuclease RuvC (176 aa).

Catalysis depends on residues aspartate 9, glutamate 69, and aspartate 141. Aspartate 9, glutamate 69, and aspartate 141 together coordinate Mg(2+).

The protein belongs to the RuvC family. In terms of assembly, homodimer which binds Holliday junction (HJ) DNA. The HJ becomes 2-fold symmetrical on binding to RuvC with unstacked arms; it has a different conformation from HJ DNA in complex with RuvA. In the full resolvosome a probable DNA-RuvA(4)-RuvB(12)-RuvC(2) complex forms which resolves the HJ. The cofactor is Mg(2+).

It localises to the cytoplasm. The enzyme catalyses Endonucleolytic cleavage at a junction such as a reciprocal single-stranded crossover between two homologous DNA duplexes (Holliday junction).. In terms of biological role, the RuvA-RuvB-RuvC complex processes Holliday junction (HJ) DNA during genetic recombination and DNA repair. Endonuclease that resolves HJ intermediates. Cleaves cruciform DNA by making single-stranded nicks across the HJ at symmetrical positions within the homologous arms, yielding a 5'-phosphate and a 3'-hydroxyl group; requires a central core of homology in the junction. The consensus cleavage sequence is 5'-(A/T)TT(C/G)-3'. Cleavage occurs on the 3'-side of the TT dinucleotide at the point of strand exchange. HJ branch migration catalyzed by RuvA-RuvB allows RuvC to scan DNA until it finds its consensus sequence, where it cleaves and resolves the cruciform DNA. This Chromobacterium violaceum (strain ATCC 12472 / DSM 30191 / JCM 1249 / CCUG 213 / NBRC 12614 / NCIMB 9131 / NCTC 9757 / MK) protein is Crossover junction endodeoxyribonuclease RuvC.